The sequence spans 471 residues: Phosphoglycerate kinase (471 aa).

Substrate contacts are provided by residues 24-26 (DFN), Arg-41, 64-67 (HLSR), Arg-127, and Arg-169. ATP-binding positions include Lys-220, Gly-307, Glu-338, and 368-371 (GGDS). Residues 417-471 (KVEAVKEKTTTTTESASKEKSSTAKTASKPATSKTTAAKKPAEKKPAAKKPAAKK) are disordered. Over residues 439 to 455 (TAKTASKPATSKTTAAK) the composition is skewed to low complexity.

It belongs to the phosphoglycerate kinase family. As to quaternary structure, monomer.

The protein resides in the cytoplasm. It carries out the reaction (2R)-3-phosphoglycerate + ATP = (2R)-3-phospho-glyceroyl phosphate + ADP. The protein operates within carbohydrate degradation; glycolysis; pyruvate from D-glyceraldehyde 3-phosphate: step 2/5. This chain is Phosphoglycerate kinase, found in Malacoplasma penetrans (strain HF-2) (Mycoplasma penetrans).